The following is a 260-amino-acid chain: Manganese transport system ATP-binding protein MntA (260 aa).

The 236-residue stretch at Ile10 to Pro245 folds into the ABC transporter domain. Gly43–Ser50 lines the ATP pocket.

It belongs to the ABC transporter superfamily.

Its function is as follows. Part of an ATP-driven transport system for manganese. The polypeptide is Manganese transport system ATP-binding protein MntA (mntA) (Synechocystis sp. (strain ATCC 27184 / PCC 6803 / Kazusa)).